Here is a 205-residue protein sequence, read N- to C-terminus: Cytochrome c biogenesis ATP-binding export protein CcmA (205 aa).

An ABC transporter domain is found at 2–204 (LEVSNLTAIR…SPKLRKIKLG (203 aa)). 34-41 (GRNGTGKT) is a binding site for ATP.

This sequence belongs to the ABC transporter superfamily. CcmA exporter (TC 3.A.1.107) family. As to quaternary structure, the complex is composed of two ATP-binding proteins (CcmA) and two transmembrane proteins (CcmB).

The protein resides in the cell inner membrane. It catalyses the reaction heme b(in) + ATP + H2O = heme b(out) + ADP + phosphate + H(+). Its function is as follows. Part of the ABC transporter complex CcmAB involved in the biogenesis of c-type cytochromes; once thought to export heme, this seems not to be the case, but its exact role is uncertain. Responsible for energy coupling to the transport system. This chain is Cytochrome c biogenesis ATP-binding export protein CcmA, found in Vibrio vulnificus (strain YJ016).